The sequence spans 299 residues: NAD kinase (299 aa).

The Proton acceptor role is filled by Asp-71. Residues Asp-71–Gly-72, Asn-145–Asp-146, Arg-173, Asp-175, Thr-186–Ser-191, Ala-210, and Gln-248 contribute to the NAD(+) site.

Belongs to the NAD kinase family. A divalent metal cation is required as a cofactor.

It is found in the cytoplasm. It carries out the reaction NAD(+) + ATP = ADP + NADP(+) + H(+). Involved in the regulation of the intracellular balance of NAD and NADP, and is a key enzyme in the biosynthesis of NADP. Catalyzes specifically the phosphorylation on 2'-hydroxyl of the adenosine moiety of NAD to yield NADP. The polypeptide is NAD kinase (Bordetella avium (strain 197N)).